Reading from the N-terminus, the 367-residue chain is NAD(P)H-quinone oxidoreductase subunit 1, chloroplastic (367 aa).

8 helical membrane passes run 29-49 (WIPL…LVVV), 96-116 (VLLF…SYLI), 128-148 (INLG…GLLM), 176-196 (LALC…IDIV), 204-224 (ILGW…IAAL), 266-286 (LVSA…PIPI), 304-324 (VISA…FLFL), and 347-367 (FLLP…IALL).

The protein belongs to the complex I subunit 1 family. As to quaternary structure, NDH is composed of at least 16 different subunits, 5 of which are encoded in the nucleus.

The protein localises to the plastid. It localises to the chloroplast thylakoid membrane. The catalysed reaction is a plastoquinone + NADH + (n+1) H(+)(in) = a plastoquinol + NAD(+) + n H(+)(out). It catalyses the reaction a plastoquinone + NADPH + (n+1) H(+)(in) = a plastoquinol + NADP(+) + n H(+)(out). Its function is as follows. NDH shuttles electrons from NAD(P)H:plastoquinone, via FMN and iron-sulfur (Fe-S) centers, to quinones in the photosynthetic chain and possibly in a chloroplast respiratory chain. The immediate electron acceptor for the enzyme in this species is believed to be plastoquinone. Couples the redox reaction to proton translocation, and thus conserves the redox energy in a proton gradient. The protein is NAD(P)H-quinone oxidoreductase subunit 1, chloroplastic of Mesostigma viride (Green alga).